A 138-amino-acid polypeptide reads, in one-letter code: Large ribosomal subunit protein uL16 (138 aa).

It belongs to the universal ribosomal protein uL16 family. As to quaternary structure, part of the 50S ribosomal subunit.

Functionally, binds 23S rRNA and is also seen to make contacts with the A and possibly P site tRNAs. The protein is Large ribosomal subunit protein uL16 of Gluconobacter oxydans (strain 621H) (Gluconobacter suboxydans).